Here is a 364-residue protein sequence, read N- to C-terminus: DNA replication and repair protein RecF (364 aa).

30-37 (GLNAQGKS) contributes to the ATP binding site.

It belongs to the RecF family.

The protein resides in the cytoplasm. In terms of biological role, the RecF protein is involved in DNA metabolism; it is required for DNA replication and normal SOS inducibility. RecF binds preferentially to single-stranded, linear DNA. It also seems to bind ATP. The sequence is that of DNA replication and repair protein RecF from Caldanaerobacter subterraneus subsp. tengcongensis (strain DSM 15242 / JCM 11007 / NBRC 100824 / MB4) (Thermoanaerobacter tengcongensis).